A 940-amino-acid polypeptide reads, in one-letter code: Phagocyte signaling-impaired protein (940 aa).

Residues 77 to 110 form a TPR repeat; it reads STTLHVMTLCYKETDQLDKICQIFTSASKQLPGN.

The protein belongs to the MDM20/NAA25 family. In terms of assembly, component of the N-terminal acetyltransferase B (NatB) complex.

The protein localises to the lysosome. In terms of biological role, non-catalytic subunit of the NatB complex which catalyzes acetylation of the N-terminal methionine residues of proteins beginning with Met-Asp or Met-Glu. Has 2 roles in the larval immune response: required both for the phagocytic degradation of internalized bacteria and for the induction of Defensin in the fat body. Within the phagocytic blood cells, has a role in detection of infection and activation of the humoral immune response. The sequence is that of Phagocyte signaling-impaired protein from Aedes aegypti (Yellowfever mosquito).